The primary structure comprises 204 residues: Pyrrolidone-carboxylate peptidase (204 aa).

Catalysis depends on residues E80, C142, and H165.

It belongs to the peptidase C15 family. Homotetramer.

It localises to the cytoplasm. It carries out the reaction Release of an N-terminal pyroglutamyl group from a polypeptide, the second amino acid generally not being Pro.. Functionally, removes 5-oxoproline from various penultimate amino acid residues except L-proline. This Lysinibacillus sphaericus (strain C3-41) protein is Pyrrolidone-carboxylate peptidase.